The following is a 368-amino-acid chain: Propane 2-monooxygenase, hydroxylase component small subunit (368 aa).

Basic and acidic residues predominate over residues 1-17; it reads MSAPEKPRERSFPKIEF. The interval 1–32 is disordered; sequence MSAPEKPRERSFPKIEFTDSEAGAKEFPSSKS.

It belongs to the TmoE/XamoE family. The propane 2-monooxygenase multicomponent enzyme system is composed of an electron transfer component and a monooxygenase component interacting with the effector protein MimD. The electron transfer component is composed of a reductase (MimB), and the monooxygenase component is formed by a large subunit (MimA) and a small subunit (MimC). Requires the presence of the chaperonin-like protein MimG to ensure a productive folding, resulting of a soluble MimC, which leads to the active form of MimABCD.

It catalyses the reaction propane + NADH + O2 + H(+) = propan-2-ol + NAD(+) + H2O. The enzyme catalyses acetone + NADH + O2 + H(+) = hydroxyacetone + NAD(+) + H2O. It carries out the reaction butan-2-one + NADH + O2 + H(+) = 1-hydroxy-2-butanone + NAD(+) + H2O. The catalysed reaction is phenol + NADH + O2 + H(+) = hydroquinone + NAD(+) + H2O. Functionally, component of the propane 2-monooxygenase multicomponent enzyme system which is involved in the degradation of propane via the O2-dependent hydroxylation of propane. Also involved in the degradation of acetone via the O2-dependent hydroxylation of acetone. Also able to catalyze the oxidation of phenol, methylethylketone (2-butanone), 1-propanol and 2-propanol. This is Propane 2-monooxygenase, hydroxylase component small subunit from Mycolicibacterium smegmatis (strain ATCC 700084 / mc(2)155) (Mycobacterium smegmatis).